Reading from the N-terminus, the 99-residue chain is Acylphosphatase (99 aa).

The Acylphosphatase-like domain maps to 14 to 99 (AVDVTVTGRV…DQGLRSFGVR (86 aa)). Residues arginine 29 and asparagine 47 contribute to the active site.

This sequence belongs to the acylphosphatase family.

It carries out the reaction an acyl phosphate + H2O = a carboxylate + phosphate + H(+). In Nocardioides sp. (strain ATCC BAA-499 / JS614), this protein is Acylphosphatase (acyP).